The following is a 336-amino-acid chain: E3 ubiquitin-protein ligase RING2 (336 aa).

Residues 2–179 (TQTVQTNGVQ…AEDNGDSSHC (178 aa)) form an interaction with HIP2 region. The RING-type zinc finger occupies 51 to 91 (CPICLDMLKNTMTTKECLHRFCADCIITALRSGNKECPTCR). The interaction with nucleosomes via an acidic patch on histone H2A and histone H2B stretch occupies residues 93 to 98 (KLVSKR). Positions 158–218 (RGKKHQIENG…NATENGGGDI (61 aa)) are disordered. A compositionally biased stretch (polar residues) spans 176-190 (SSHCSNASVHSNQEA).

As to quaternary structure, component of chromatin-associated Polycomb (PcG) complexes. Component of a PRC1-like complex. Component of some MLL1/MLL complex.

It localises to the nucleus. The protein resides in the cytoplasm. Its subcellular location is the chromosome. The catalysed reaction is S-ubiquitinyl-[E2 ubiquitin-conjugating enzyme]-L-cysteine + [acceptor protein]-L-lysine = [E2 ubiquitin-conjugating enzyme]-L-cysteine + N(6)-ubiquitinyl-[acceptor protein]-L-lysine.. It functions in the pathway protein modification; protein ubiquitination. E3 ubiquitin-protein ligase that mediates monoubiquitination of 'Lys-119' of histone H2A (H2AK119Ub), thereby playing a central role in histone code and gene regulation. H2AK119Ub gives a specific tag for epigenetic transcriptional repression. Essential component of a Polycomb group (PcG) multiprotein PRC1-like complex, a complex class required to maintain the transcriptionally repressive state of many genes, including Hox genes, throughout development. PcG PRC1 complex acts via chromatin remodeling and modification of histones, rendering chromatin heritably changed in its expressibility. This chain is E3 ubiquitin-protein ligase RING2 (rnf2), found in Danio rerio (Zebrafish).